Consider the following 109-residue polypeptide: MSQGVQFNRLMLEMRAMQTDAMARSKPEVQTQEVGAPSFSDMLGQAVNKVHETQQVSSQLASAFEMGQGGVDLTEVMIASQKASVSFQAMTQVRNKLVQAYQDIMQMPV.

This sequence belongs to the FliE family.

The protein localises to the bacterial flagellum basal body. This is Flagellar hook-basal body complex protein FliE from Stutzerimonas stutzeri (strain A1501) (Pseudomonas stutzeri).